Here is a 540-residue protein sequence, read N- to C-terminus: FAD-binding monooxygenase lolF2 (540 aa).

FAD is bound by residues 43–46 (VWRE) and 55–58 (DSLF). NADP(+) contacts are provided by residues 53 to 55 (AVD), 182 to 188 (TGPSGVQ), and 205 to 206 (QS).

Belongs to the FAD-binding monooxygenase family. FAD serves as cofactor.

Its pathway is alkaloid biosynthesis. In terms of biological role, FAD-binding monooxygenase; part of the gene cluster that mediates the biosynthesis of loline alkaloids, potent insecticidal agents composed of a pyrrolizidine ring system and an uncommon ether bridge linking carbons 2 and 7. Lolines are structurally differentiated by the various modifications of the L-amino group and include norloline, loline, N-methylloline, N-acetylloline, N-acetylnorloline, and N-formylloline. The first committed step is the condensation of O-acetyl-L-homoserine (derived from L-aspartic acid) and L-proline, probably catalyzed by the gamma-type pyridoxal 5'-phosphate(PLP)-dependent enzyme lolC, to give the diamino diacid, NACPP. Ensuing cyclization, decarboxylation, and acetylation steps yield 1-exo-acetamidopyrrolizidine (AcAP). LolO is required for installation of the ether bridge upon the pathway intermediate, 1-exo-acetamidopyrrolizidine (AcAP). In sequential 2-oxoglutarate- and O(2)-consuming steps, lolO removes hydrogens from C2 and C7 of AcAP to form both carbon-oxygen bonds in N-acetylnorloline (NANL), the precursor to all other lolines. The enzymes lolD, lolE, lolF and lolT have also been proposed to be involved in the ether-bridge installation. Further processing of the exocyclic moiety of NANL by fungal N-acetamidase (LolN), methyltransferase (LolM), and cytochrome P450 (LolP) enzymes, with occasional involvement of a plant acetyltransferase, generates the other known lolines. LolN transforms NANL to norlonine which is monomethylated and dimethylated to respectively lonine and N-methyllonine (NML) by lolM. LolP catalyzes hydroxylation of the methyl group in N-methylloline (NML) and further oxygenation to N-formylloline (NFL). A plant acetyltransferase is responsible for the acetylation of loline to form N-acetylloline (NAL). LolA might interact with aspartate kinase to prevent feedback inhibition of its activity by these end products and thereby promote production of l-homoserine from l-aspartate. The chain is FAD-binding monooxygenase lolF2 from Epichloe uncinata (Endophyte fungus).